A 572-amino-acid chain; its full sequence is Proline--tRNA ligase (572 aa).

It belongs to the class-II aminoacyl-tRNA synthetase family. ProS type 1 subfamily. In terms of assembly, homodimer.

It localises to the cytoplasm. The catalysed reaction is tRNA(Pro) + L-proline + ATP = L-prolyl-tRNA(Pro) + AMP + diphosphate. Its function is as follows. Catalyzes the attachment of proline to tRNA(Pro) in a two-step reaction: proline is first activated by ATP to form Pro-AMP and then transferred to the acceptor end of tRNA(Pro). As ProRS can inadvertently accommodate and process non-cognate amino acids such as alanine and cysteine, to avoid such errors it has two additional distinct editing activities against alanine. One activity is designated as 'pretransfer' editing and involves the tRNA(Pro)-independent hydrolysis of activated Ala-AMP. The other activity is designated 'posttransfer' editing and involves deacylation of mischarged Ala-tRNA(Pro). The misacylated Cys-tRNA(Pro) is not edited by ProRS. This Haemophilus influenzae (strain PittEE) protein is Proline--tRNA ligase.